Consider the following 330-residue polypeptide: ADP-L-glycero-D-manno-heptose-6-epimerase (330 aa).

NADP(+) is bound by residues 11 to 12 (FI), 32 to 33 (DD), Gln-39, Gln-54, 75 to 79 (QGACA), and Asn-92. The active-site Proton acceptor is the Tyr-139. Lys-143 serves as a coordination point for NADP(+). Asn-168 contacts substrate. Positions 169 and 177 each coordinate NADP(+). Lys-177 functions as the Proton acceptor in the catalytic mechanism. Substrate-binding positions include Arg-179, His-186, 200 to 203 (FGEH), Arg-213, and Tyr-292.

It belongs to the NAD(P)-dependent epimerase/dehydratase family. HldD subfamily. In terms of assembly, homopentamer. NADP(+) serves as cofactor.

It carries out the reaction ADP-D-glycero-beta-D-manno-heptose = ADP-L-glycero-beta-D-manno-heptose. The protein operates within nucleotide-sugar biosynthesis; ADP-L-glycero-beta-D-manno-heptose biosynthesis; ADP-L-glycero-beta-D-manno-heptose from D-glycero-beta-D-manno-heptose 7-phosphate: step 4/4. Catalyzes the interconversion between ADP-D-glycero-beta-D-manno-heptose and ADP-L-glycero-beta-D-manno-heptose via an epimerization at carbon 6 of the heptose. This chain is ADP-L-glycero-D-manno-heptose-6-epimerase, found in Pseudomonas paraeruginosa (strain DSM 24068 / PA7) (Pseudomonas aeruginosa (strain PA7)).